The chain runs to 305 residues: uncharacterized protein (305 aa).

This is an uncharacterized protein from Streptomyces griseus.